The following is a 1131-amino-acid chain: ATP-dependent helicase FUN30 (1131 aa).

Residues 1–70 are disordered; that stretch reads MSGSHSNDED…HTSKPLPSGS (70 aa). Residues 16-36 are compositionally biased toward polar residues; it reads PETSSPTKVASSSPLKPTSPT. The segment at 76-111 is CUE-like region; that stretch reads VNLAREFPDFSQTLVQAVFKSNSFNLQSARERLTRL. The disordered stretch occupies residues 114 to 141; it reads QRQNWTWNKNASPKKSETPPPVKKSLPL. Ser232 carries the phosphoserine modification. Disordered regions lie at residues 242–273 and 327–350; these read KYGR…YTES and NDKD…ANES. The segment covering 250–271 has biased composition (acidic residues); the sequence is NDEEEEESMMTDDDDASGDDYT. A Phosphoserine modification is found at Ser369. The tract at residues 400–533 is disordered; sequence DLMNLGEDDD…GDDDDDDDDE (134 aa). The span at 405-416 shows a compositional bias: acidic residues; it reads GEDDDDDNDDGN. Over residues 417-432 the composition is skewed to low complexity; sequence NDNNNSNNNNTAGADA. A compositionally biased stretch (basic and acidic residues) spans 433–442; it reads TSKEKEDTKA. At Ser451 the chain carries Phosphoserine. Residues 480–533 show a composition bias toward acidic residues; the sequence is EDEDDDVDLEAIDDELPQSEHEDDDYEEEDEDYNDEEEDVEYDDGDDDDDDDDE. The Helicase ATP-binding domain maps to 584–752; it reads NLLYQNKMSC…MSLLEFIMPN (169 aa). 597 to 604 contacts ATP; sequence DDMGLGKT. Residues 703 to 706 carry the DEGH box motif; the sequence is DEGH. A Helicase C-terminal domain is found at 953 to 1108; that stretch reads ALKKLLKTII…EDKKSQDVLE (156 aa).

The protein belongs to the SNF2/RAD54 helicase family. In terms of assembly, homodimer.

Its subcellular location is the nucleus. It localises to the chromosome. The catalysed reaction is ATP + H2O = ADP + phosphate + H(+). DNA helicase that possesses intrinsic ATP-dependent nucleosome-remodeling activity and is both required for DNA repair and heterochromatin organization. Promotes DNA end resection of double-strand breaks (DSBs) following DNA damage: probably acts by weakening histone DNA interactions in nucleosomes flanking DSBs, facilitating single-stranded DNA (ssDNA) production by the EXO1 and SGS1 machinery. Promotes gene silencing at heterochromatin by regulating the chromatin structure within or around silent loci. Also required for heterochromatin organization at centromeres. In Saccharomyces cerevisiae (strain ATCC 204508 / S288c) (Baker's yeast), this protein is ATP-dependent helicase FUN30 (FUN30).